A 202-amino-acid polypeptide reads, in one-letter code: Pyridoxal 5'-phosphate synthase subunit PdxT (202 aa).

An L-glutamine-binding site is contributed by 48 to 50 (GES). The active-site Nucleophile is C80. L-glutamine-binding positions include R112 and 139 to 140 (IR). Residues H180 and E182 each act as charge relay system in the active site.

The protein belongs to the glutaminase PdxT/SNO family. In terms of assembly, in the presence of PdxS, forms a dodecamer of heterodimers. Only shows activity in the heterodimer.

The enzyme catalyses aldehydo-D-ribose 5-phosphate + D-glyceraldehyde 3-phosphate + L-glutamine = pyridoxal 5'-phosphate + L-glutamate + phosphate + 3 H2O + H(+). The catalysed reaction is L-glutamine + H2O = L-glutamate + NH4(+). Its pathway is cofactor biosynthesis; pyridoxal 5'-phosphate biosynthesis. Its function is as follows. Catalyzes the hydrolysis of glutamine to glutamate and ammonia as part of the biosynthesis of pyridoxal 5'-phosphate. The resulting ammonia molecule is channeled to the active site of PdxS. This Hyperthermus butylicus (strain DSM 5456 / JCM 9403 / PLM1-5) protein is Pyridoxal 5'-phosphate synthase subunit PdxT.